Consider the following 158-residue polypeptide: Transcription elongation factor GreA (158 aa).

This sequence belongs to the GreA/GreB family.

Functionally, necessary for efficient RNA polymerase transcription elongation past template-encoded arresting sites. The arresting sites in DNA have the property of trapping a certain fraction of elongating RNA polymerases that pass through, resulting in locked ternary complexes. Cleavage of the nascent transcript by cleavage factors such as GreA or GreB allows the resumption of elongation from the new 3'terminus. GreA releases sequences of 2 to 3 nucleotides. The protein is Transcription elongation factor GreA of Verminephrobacter eiseniae (strain EF01-2).